We begin with the raw amino-acid sequence, 998 residues long: MTLKVILGEHQITRTELPVGIATVSGCGAVVYCISKFWGYGAIAPYPQSGGNRVTRALQRAVIDKTKTPIETRFYPLDSLRTVTPKRAVDNGHAVSGAVRDAARRLIDESITAVGGSKFEVNPNPNSSTGLRNHFHFAVGDLAQDFRNDTPADDAFIVGVDVDYYVTEPDVLLEHMRPVVLHTFNPKKVSGFDADSPFTIKNNLVEYKVSGGAAWVHPVWDWCEAGEFIASRVRTSWKEWFLQLPLRMIGLEKVGYHKIHHCRPWTDCPDRALVYTIPQYVIWRFNWIDTELHVRKLKRIEYQDETKPGWNRLEYVTDRNELLVSIGREGEHAQITIEKEKLDMLSGLSATQSVNVRLIGMGHKDPQYTSMIVQYYTGKKVVSPISPTVYKPTMPRVHWPVTSDADVPEVSARQYTLPIVSDCMMMPMIKRWETMSESIERRVTFVANDKKPSDRIAKIAETFVKLMNGPFKDLDPLSIEETIERLNKPSQQLQLRAVFEMIGVEPRQLIESFNKNEPGMKSSRIISGFPDILFILKVSRYTLAYSDIVLHAEHNEHWYYPGRNPTEIADGVCEFVSECDAEVIETDFSNLDGRVSSWMQRNIAQKAMVQAFRPEYRDEIISFMDTIINCSAKAKRFGFRYEPGVGVKSGSSTTTPHNTQYNGCVEFTALTFEHPDAEPEDLFRLIGPKCGDDGLSRAIIQKSINRAAKCFGLELKVERYNPEIGLCFLSRVFVDPLATTTTIQDPLRTLRKLHLTTRDPTIPLADAACDRVEGHLCTDALTPLISDYCKMVLRLYGPTASTEQVRNQRRSRNKEKPYWLTCDGSWPQHPQDAHLMKQVLIKRTAIDEDQVDALIGRFAAMKDVWEKITHDSEESAAACTFDEDGVAPNSVDESLPMLNDAKQTRANPGTSRPHSNGGGSSHGNELPRRTEQRAQGPRQPARLPKQGKTNGKSDGNITAGETQRGGIPRGKGPRGGKTNTRRTPPKAGAQPQPSNNRK.

Residues leucine 17–isoleucine 34 traverse the membrane as a helical segment. The interval serine 35–lysine 998 is cytoplasmic. Residues asparagine 91–isoleucine 282 are capping. Aspartate 692 (for RdRp/TNTase activity) is an active-site residue. Residues alanine 901–lysine 998 form a disordered region. 2 stretches are compositionally biased toward polar residues: residues threonine 904–proline 913 and glycine 947–glutamate 961. The segment covering lysine 971–proline 984 has biased composition (basic residues).

This sequence belongs to the nodaviridae RNA polymerase family. As to quaternary structure, homododecamer. Forms 2 stacked rings of 35-nm in diameter, arranged in a crown-like structure at the opening of virus-induced replication vesicles. Interacts with protein B2. Mn(2+) is required as a cofactor.

Its subcellular location is the host mitochondrion outer membrane. It carries out the reaction RNA(n) + a ribonucleoside 5'-triphosphate = RNA(n+1) + diphosphate. Its activity is regulated as follows. Drastically inhibited by phosphonoacetic acid. Only slightly inhibited by gliotoxin. Functionally, RNA-dependent RNA polymerase, which replicates the viral genome composed of 2 RNA segments, RNA1 and RNA2. Does not need an exogenous primer. Also possesses a terminal nucleotidyl transferase (TNTase) activity. The TNTase catalyzes the addition of nucleotide to the 3'-end of plus- and minus-stranded RNAs, probably to repair the 3'-end nucleotide loss. Forms the open necked connection to the cytosol of the virus-induced replication vesicles. Mediates viral RNA1 recruitment. The polypeptide is RNA-directed RNA polymerase (Heteronychus arator (African black beetle)).